A 640-amino-acid polypeptide reads, in one-letter code: Threonine--tRNA ligase (640 aa).

Residues 1-61 enclose the TGS domain; sequence MPIITLPNGD…TEDSTLQIIT (61 aa). The catalytic stretch occupies residues 242–533; sequence DHRKIGKALD…LIEHYAGFMP (292 aa). Cys333, His384, and His510 together coordinate Zn(2+).

This sequence belongs to the class-II aminoacyl-tRNA synthetase family. Homodimer. It depends on Zn(2+) as a cofactor.

The protein localises to the cytoplasm. The enzyme catalyses tRNA(Thr) + L-threonine + ATP = L-threonyl-tRNA(Thr) + AMP + diphosphate + H(+). Catalyzes the attachment of threonine to tRNA(Thr) in a two-step reaction: L-threonine is first activated by ATP to form Thr-AMP and then transferred to the acceptor end of tRNA(Thr). Also edits incorrectly charged L-seryl-tRNA(Thr). This chain is Threonine--tRNA ligase, found in Acinetobacter baumannii (strain AB307-0294).